A 148-amino-acid chain; its full sequence is Transcriptional regulator MraZ (148 aa).

SpoVT-AbrB domains are found at residues 5–53 and 82–125; these read ETAI…AEKE and SAVL…SEQA.

Belongs to the MraZ family. As to quaternary structure, forms oligomers.

Its subcellular location is the cytoplasm. It localises to the nucleoid. This Xanthomonas oryzae pv. oryzae (strain MAFF 311018) protein is Transcriptional regulator MraZ.